The chain runs to 344 residues: Uroporphyrinogen decarboxylase (344 aa).

Residues 26–30 (RQAGR), Asp76, Tyr151, Ser206, and His321 contribute to the substrate site.

Belongs to the uroporphyrinogen decarboxylase family. Homodimer.

It localises to the cytoplasm. It carries out the reaction uroporphyrinogen III + 4 H(+) = coproporphyrinogen III + 4 CO2. Its pathway is porphyrin-containing compound metabolism; protoporphyrin-IX biosynthesis; coproporphyrinogen-III from 5-aminolevulinate: step 4/4. Its function is as follows. Catalyzes the decarboxylation of four acetate groups of uroporphyrinogen-III to yield coproporphyrinogen-III. This chain is Uroporphyrinogen decarboxylase, found in Sinorhizobium fredii (strain NBRC 101917 / NGR234).